The chain runs to 349 residues: Alpha-centractin (349 aa).

Methionine 1 is modified (N-acetylmethionine).

Belongs to the actin family. ARP1 subfamily. As to quaternary structure, part of the ACTR1A/ACTB filament around which the dynactin complex is built. The filament contains 8 copies of ACTR1A and 1 ACTB. Interacts with dynein and adapters such as BICD2. Interacts with BCCIP (isoform 2/alpha).

The protein resides in the cytoplasm. It localises to the cytoskeleton. It is found in the microtubule organizing center. The protein localises to the centrosome. Its subcellular location is the cell cortex. Functionally, part of the ACTR1A/ACTB filament around which the dynactin complex is built. The dynactin multiprotein complex activates the molecular motor dynein for ultra-processive transport along microtubules. The polypeptide is Alpha-centractin (ACTR1A) (Sus scrofa (Pig)).